The following is a 320-amino-acid chain: Integrin-binding sialoprotein (320 aa).

An N-terminal signal peptide occupies residues 1-16 (MKTALILLCILGMASA). Phosphoserine is present on residues Ser-31, Ser-68, Ser-76, Ser-77, and Ser-96. Disordered stretches follow at residues 60-117 (PVQG…VTAS), 136-225 (LPKK…RELT), and 238-264 (FQQT…VEYG). Over residues 67–106 (SSEENGDGDSSEEEGEEEETSNEEENNEDSEGNEDQEAEA) the composition is skewed to acidic residues. Asn-108 carries N-linked (GlcNAc...) asparagine glycosylation. Residues 139–152 (KAGDAEGKAPKMKE) show a composition bias toward basic and acidic residues. At Ser-153 the chain carries Phosphoserine. Positions 153-176 (SDEEEEEEEEEENENEEAEVDENE) are enriched in acidic residues. 2 stretches are compositionally biased toward polar residues: residues 177–188 (QVVNGTSTNSTE) and 249–261 (GTTS…SSTV). N-linked (GlcNAc...) asparagine glycans are attached at residues Asn-180 and Asn-185. An Integrin-binding motif motif is present at residues 289-291 (RGD). Sulfotyrosine occurs at positions 316 and 317.

In terms of assembly, monomer. Interacts with integrins; the interaction promotes cell adhesion.

It is found in the secreted. In terms of biological role, binds tightly to hydroxyapatite. Appears to form an integral part of the mineralized matrix. Probably important to cell-matrix interaction. Promotes adhesion and migration of various cells via the alpha-V/beta-3 integrin receptor (ITGAV:ITGB3). The protein is Integrin-binding sialoprotein (Ibsp) of Rattus norvegicus (Rat).